The primary structure comprises 292 residues: Probable 2-(5''-triphosphoribosyl)-3'-dephosphocoenzyme-A synthase (292 aa).

It belongs to the CitG/MdcB family.

The catalysed reaction is 3'-dephospho-CoA + ATP = 2'-(5''-triphospho-alpha-D-ribosyl)-3'-dephospho-CoA + adenine. In Shigella flexneri, this protein is Probable 2-(5''-triphosphoribosyl)-3'-dephosphocoenzyme-A synthase.